The following is a 359-amino-acid chain: F-box/kelch-repeat protein At1g15670 (359 aa).

The F-box domain occupies 2–49 (ELIPDLPETVAYECLLRSSYKQFPLMASVCKLWQREISLSDFFRHRKA). 5 Kelch repeats span residues 119-167 (DLVV…ASDS), 170-217 (NVFV…FHAG), 219-269 (FHVI…CAAG), 271-310 (NGDLYACCRRDLMMMKDDTWYKVGNLPADVCNVSYVAIRR), and 313-358 (NLVV…CFLE).

This Arabidopsis thaliana (Mouse-ear cress) protein is F-box/kelch-repeat protein At1g15670.